A 536-amino-acid chain; its full sequence is Apolipoprotein N-acyltransferase (536 aa).

6 helical membrane-spanning segments follow: residues 34–54 (PLWW…RPGA), 64–84 (ALIG…WLFI), 89–109 (YGAL…AFLA), 129–149 (GAAL…GSLW), 172–192 (YVGV…CVQW), and 199–219 (HWPM…AAVQ). A CN hydrolase domain is found at 244–487 (LQGNIAQDEK…RGVLRGQVHG (244 aa)). The active-site Proton acceptor is the E283. Residue K345 is part of the active site. C395 functions as the Nucleophile in the catalytic mechanism. The chain crosses the membrane as a helical span at residues 503–523 (WWVARWGLWPLWALAALALAW).

This sequence belongs to the CN hydrolase family. Apolipoprotein N-acyltransferase subfamily.

The protein localises to the cell inner membrane. The catalysed reaction is N-terminal S-1,2-diacyl-sn-glyceryl-L-cysteinyl-[lipoprotein] + a glycerophospholipid = N-acyl-S-1,2-diacyl-sn-glyceryl-L-cysteinyl-[lipoprotein] + a 2-acyl-sn-glycero-3-phospholipid + H(+). Its pathway is protein modification; lipoprotein biosynthesis (N-acyl transfer). Functionally, catalyzes the phospholipid dependent N-acylation of the N-terminal cysteine of apolipoprotein, the last step in lipoprotein maturation. The chain is Apolipoprotein N-acyltransferase from Verminephrobacter eiseniae (strain EF01-2).